The primary structure comprises 718 residues: Phospholipid phosphatase-related protein type 3 (718 aa).

3 consecutive transmembrane segments (helical) span residues 18–38 (LPCF…SLYF), 70–90 (LIPL…SIMV), and 133–153 (FVGV…VIQL). Residue Asn-169 is glycosylated (N-linked (GlcNAc...) asparagine). Transmembrane regions (helical) follow at residues 207 to 227 (HATL…SVIS), 233 to 253 (LKPI…LTQI), and 263 to 283 (VYAG…HAVG). Residues 313–347 (SVYQQNKSVSTDELGPPGRLEGAPRPVAREKTSLG) form a disordered region. Residues 314-323 (VYQQNKSVST) are compositionally biased toward polar residues. An N-linked (GlcNAc...) asparagine glycan is attached at Asn-318. Phosphoserine occurs at positions 322 and 353. At Thr-376 the chain carries Phosphothreonine. A disordered region spans residues 416-488 (LEGRGLGLPD…GPRVILPPRA (73 aa)). Ser-428 bears the Phosphoserine mark. Positions 439-462 (MAEEEEEEEDEEEEEEEEEEEDEG) are enriched in acidic residues. Ser-508 carries the post-translational modification Phosphoserine. Low complexity predominate over residues 545 to 571 (APGAPGPKAAETASSSSASSDSSQYRS). Positions 545 to 577 (APGAPGPKAAETASSSSASSDSSQYRSPSDRDS) are disordered. Ser-641 is subject to Phosphoserine. Positions 664–680 (GEGLPPLGAADGALGPG) are enriched in low complexity. The tract at residues 664–702 (GEGLPPLGAADGALGPGSRESTLRRHAGGLGLAEREAEA) is disordered.

This sequence belongs to the PA-phosphatase related phosphoesterase family.

Its subcellular location is the membrane. The sequence is that of Phospholipid phosphatase-related protein type 3 from Homo sapiens (Human).